We begin with the raw amino-acid sequence, 274 residues long: Thymidylate synthase (274 aa).

Position 21 (R21) interacts with dUMP. H51 is a (6R)-5,10-methylene-5,6,7,8-tetrahydrofolate binding site. Residue 123–124 (RR) coordinates dUMP. C156 (nucleophile) is an active-site residue. DUMP-binding positions include 176–179 (RSAD), N187, and 217–219 (HIY). Residue D179 coordinates (6R)-5,10-methylene-5,6,7,8-tetrahydrofolate. Residue S273 participates in (6R)-5,10-methylene-5,6,7,8-tetrahydrofolate binding.

It belongs to the thymidylate synthase family. Bacterial-type ThyA subfamily. Homodimer.

Its subcellular location is the cytoplasm. The enzyme catalyses dUMP + (6R)-5,10-methylene-5,6,7,8-tetrahydrofolate = 7,8-dihydrofolate + dTMP. It participates in pyrimidine metabolism; dTTP biosynthesis. In terms of biological role, catalyzes the reductive methylation of 2'-deoxyuridine-5'-monophosphate (dUMP) to 2'-deoxythymidine-5'-monophosphate (dTMP) while utilizing 5,10-methylenetetrahydrofolate (mTHF) as the methyl donor and reductant in the reaction, yielding dihydrofolate (DHF) as a by-product. This enzymatic reaction provides an intracellular de novo source of dTMP, an essential precursor for DNA biosynthesis. In Francisella philomiragia subsp. philomiragia (strain ATCC 25017 / CCUG 19701 / FSC 153 / O#319-036), this protein is Thymidylate synthase.